A 199-amino-acid chain; its full sequence is Probable GTP-binding protein EngB (199 aa).

An EngB-type G domain is found at 22-196; that stretch reads NWPEFAFSGR…GKFILDLVDS (175 aa). GTP contacts are provided by residues 30-37, 57-61, 75-78, 142-145, and 175-177; these read GRSNVGKS, GRTQS, DLPG, TKVD, and FSA. Mg(2+) contacts are provided by serine 37 and threonine 59.

This sequence belongs to the TRAFAC class TrmE-Era-EngA-EngB-Septin-like GTPase superfamily. EngB GTPase family. It depends on Mg(2+) as a cofactor.

Its function is as follows. Necessary for normal cell division and for the maintenance of normal septation. In Halothermothrix orenii (strain H 168 / OCM 544 / DSM 9562), this protein is Probable GTP-binding protein EngB.